A 195-amino-acid chain; its full sequence is Phosphoheptose isomerase (195 aa).

Residues 35-195 (IVSKILQAGN…IVEYNLFKME (161 aa)) form the SIS domain. 51–53 (NGG) is a substrate binding site. His60 and Glu64 together coordinate Zn(2+). Substrate contacts are provided by residues Glu64, 95–96 (ND), 121–123 (STS), Ser126, and Gln173. Residues Gln173 and His181 each coordinate Zn(2+).

This sequence belongs to the SIS family. GmhA subfamily. Zn(2+) is required as a cofactor.

The protein resides in the cytoplasm. The enzyme catalyses 2 D-sedoheptulose 7-phosphate = D-glycero-alpha-D-manno-heptose 7-phosphate + D-glycero-beta-D-manno-heptose 7-phosphate. The protein operates within carbohydrate biosynthesis; D-glycero-D-manno-heptose 7-phosphate biosynthesis; D-glycero-alpha-D-manno-heptose 7-phosphate and D-glycero-beta-D-manno-heptose 7-phosphate from sedoheptulose 7-phosphate: step 1/1. Its function is as follows. Catalyzes the isomerization of sedoheptulose 7-phosphate in D-glycero-D-manno-heptose 7-phosphate. The sequence is that of Phosphoheptose isomerase from Leptospira interrogans serogroup Icterohaemorrhagiae serovar copenhageni (strain Fiocruz L1-130).